A 399-amino-acid chain; its full sequence is Glutamyl-tRNA reductase (399 aa).

Residues 45 to 48 (TCNR), S101, 106 to 108 (EDQ), and Q112 contribute to the substrate site. The Nucleophile role is filled by C46. Position 177–182 (177–182 (GFGKIG)) interacts with NADP(+).

The protein belongs to the glutamyl-tRNA reductase family. As to quaternary structure, homodimer.

The enzyme catalyses (S)-4-amino-5-oxopentanoate + tRNA(Glu) + NADP(+) = L-glutamyl-tRNA(Glu) + NADPH + H(+). The protein operates within porphyrin-containing compound metabolism; protoporphyrin-IX biosynthesis; 5-aminolevulinate from L-glutamyl-tRNA(Glu): step 1/2. Its function is as follows. Catalyzes the NADPH-dependent reduction of glutamyl-tRNA(Glu) to glutamate 1-semialdehyde (GSA). This chain is Glutamyl-tRNA reductase, found in Clostridium kluyveri (strain ATCC 8527 / DSM 555 / NBRC 12016 / NCIMB 10680 / K1).